Reading from the N-terminus, the 151-residue chain is Large ribosomal subunit protein uL15 (151 aa).

The disordered stretch occupies residues 37-57 (GMRGQKSRSGRPTRPGFEGGQ).

It belongs to the universal ribosomal protein uL15 family. In terms of assembly, part of the 50S ribosomal subunit.

In terms of biological role, binds to the 23S rRNA. The chain is Large ribosomal subunit protein uL15 from Prochlorococcus marinus (strain MIT 9313).